Consider the following 440-residue polypeptide: Cytochrome c biogenesis protein Ccs1 (440 aa).

The next 3 membrane-spanning stretches (helical) occupy residues 19–39 (LRLAIWLLASIGILIALGTFI), 78–98 (NIWFFGIVGFFASSLLACTYT), and 164–184 (VGPILVHFSILFVLFGSACGA).

This sequence belongs to the Ccs1/CcsB family. As to quaternary structure, may interact with CcsA.

It localises to the plastid. The protein localises to the chloroplast thylakoid membrane. Required during biogenesis of c-type cytochromes (cytochrome c6 and cytochrome f) at the step of heme attachment. The polypeptide is Cytochrome c biogenesis protein Ccs1 (Emiliania huxleyi (Coccolithophore)).